Reading from the N-terminus, the 650-residue chain is Growth hormone receptor (650 aa).

A signal peptide spans 1-24 (MDLCQVFLTLALAVTSSTFSGSEA). Residues 25–273 (TPATLGKASP…ILEACEEDIQ (249 aa)) are Extracellular-facing. Intrachain disulfides connect Cys-56-Cys-66 and Cys-109-Cys-120. A glycan (N-linked (GlcNAc...) asparagine) is linked at Asn-123. Cys-134 and Cys-148 are joined by a disulfide. The 104-residue stretch at 159-262 (PPIGLNWTLL…EVLRVIFPQT (104 aa)) folds into the Fibronectin type-III domain. Asn-164, Asn-169, and Asn-208 each carry an N-linked (GlcNAc...) asparagine glycan. A WSXWS motif motif is present at residues 248–252 (YSEFS). Residues 274-297 (FPWFLIIIFGIFGVAVMLFVVIFS) form a helical membrane-spanning segment. Over 298–650 (KQQRIKMLIL…STDQLNKIMQ (353 aa)) the chain is Cytoplasmic. The interval 303-390 (KMLILPPVPV…HEKSAGILGA (88 aa)) is required for JAK2 binding. A Box 1 motif motif is present at residues 306-314 (ILPPVPVPK). The short motif at 349–358 (DSWVEFIELD) is the UbE motif element. Ser-350 is subject to Phosphoserine. The disordered stretch occupies residues 466–486 (KPQPLLSSETEATHQLASTPM). A compositionally biased stretch (polar residues) spans 470 to 486 (LLSSETEATHQLASTPM). A phosphotyrosine mark is found at Tyr-498 and Tyr-606.

Belongs to the type I cytokine receptor family. Type 1 subfamily. As to quaternary structure, on growth hormone (GH) binding, forms homodimers and binds JAK2 via a box 1-containing domain. In terms of processing, the soluble form (GHBP) is produced by phorbol ester-promoted proteolytic cleavage at the cell surface (shedding) by ADAM17/TACE. Shedding is inhibited by growth hormone (GH) binding to the receptor probably due to a conformational change in GHR rendering the receptor inaccessible to ADAM17. On GH binding, phosphorylated on tyrosine residues in the cytoplasmic domain by JAK2. Post-translationally, ubiquitinated by the ECS(SOCS2) complex following ligand-binding and phosphorylation by JAK2, leading to its degradation by the proteasome. Regulation by the ECS(SOCS2) complex acts as a negative feedback loop of growth hormone receptor signaling. Ubiquitination is not sufficient for GHR internalization. Expressed in all tissues tested including, liver, heart, adipose tissue, mammary gland, testes, ovary, brain, kidney and muscle. Highest levels in liver.

It is found in the cell membrane. The protein localises to the secreted. Receptor for pituitary gland growth hormone (GH1) involved in regulating postnatal body growth. On ligand binding, couples to the JAK2/STAT5 pathway. Functionally, the soluble form (GHBP) acts as a reservoir of growth hormone in plasma and may be a modulator/inhibitor of GH signaling. The chain is Growth hormone receptor (Ghr) from Mus musculus (Mouse).